Reading from the N-terminus, the 152-residue chain is Acidic phospholipase A2 57 (152 aa).

Positions Met1–Ser21 are cleaved as a signal peptide. A propeptide spanning residues Ile22 to Leu27 is cleaved from the precursor. Cystine bridges form between Cys38–Cys104, Cys54–Cys151, Cys56–Cys72, Cys71–Cys132, Cys78–Cys125, Cys88–Cys118, and Cys111–Cys123. Ca(2+) contacts are provided by Tyr55, Gly57, and Gly59. The active site involves His75. Asp76 is a binding site for Ca(2+). Residue Asp126 is part of the active site.

Belongs to the phospholipase A2 family. Group I subfamily. D49 sub-subfamily. Ca(2+) serves as cofactor. As to expression, expressed by the venom gland.

It localises to the secreted. It catalyses the reaction a 1,2-diacyl-sn-glycero-3-phosphocholine + H2O = a 1-acyl-sn-glycero-3-phosphocholine + a fatty acid + H(+). Its function is as follows. PLA2 catalyzes the calcium-dependent hydrolysis of the 2-acyl groups in 3-sn-phosphoglycerides. This is Acidic phospholipase A2 57 from Hydrophis hardwickii (Hardwick's spine-bellied seasnake).